The sequence spans 124 residues: Large ribosomal subunit protein eL22 (124 aa).

This sequence belongs to the eukaryotic ribosomal protein eL22 family. As to quaternary structure, component of the large ribosomal subunit. Mature ribosomes consist of a small (40S) and a large (60S) subunit. The 40S subunit contains about 32 different proteins and 1 molecule of RNA (18S). The 60S subunit contains 45 different proteins and 3 molecules of RNA (25S, 5.8S and 5S).

It localises to the cytoplasm. Its function is as follows. Component of the ribosome, a large ribonucleoprotein complex responsible for the synthesis of proteins in the cell. The small ribosomal subunit (SSU) binds messenger RNAs (mRNAs) and translates the encoded message by selecting cognate aminoacyl-transfer RNA (tRNA) molecules. The large subunit (LSU) contains the ribosomal catalytic site termed the peptidyl transferase center (PTC), which catalyzes the formation of peptide bonds, thereby polymerizing the amino acids delivered by tRNAs into a polypeptide chain. The nascent polypeptides leave the ribosome through a tunnel in the LSU and interact with protein factors that function in enzymatic processing, targeting, and the membrane insertion of nascent chains at the exit of the ribosomal tunnel. This chain is Large ribosomal subunit protein eL22, found in Candida albicans (strain SC5314 / ATCC MYA-2876) (Yeast).